The chain runs to 659 residues: Putative cysteine-rich receptor-like protein kinase 39 (659 aa).

The signal sequence occupies residues 1 to 27; sequence MGKYSVLMIFIASSLLIVLQNVEIVNA. Gnk2-homologous domains follow at residues 28–134 and 142–253; these read VGCT…NHST and PSVR…LYAF. Over 28–289 the chain is Extracellular; the sequence is VGCTGSFFNG…KKKGRSIGYG (262 aa). N-linked (GlcNAc...) asparagine glycosylation is found at Asn-38, Asn-64, Asn-122, Asn-131, Asn-157, Asn-170, Asn-259, and Asn-274. A helical membrane pass occupies residues 290–310; the sequence is GIIAIVVVLTFINILVFIGYI. The Cytoplasmic segment spans residues 311 to 659; it reads KVYGRRKESY…DDVFTELSCR (349 aa). Positions 353 to 619 constitute a Protein kinase domain; the sequence is FSSENTLGQG…PTMSSVIIWL (267 aa). ATP is bound by residues 359-367 and Lys-381; that span reads LGQGGFGTV. At Tyr-426 the chain carries Phosphotyrosine. Asp-478 serves as the catalytic Proton acceptor. Ser-482 is subject to Phosphoserine. At Thr-518 the chain carries Phosphothreonine. Tyr-526 bears the Phosphotyrosine mark.

Belongs to the protein kinase superfamily. Ser/Thr protein kinase family. CRK subfamily.

The protein localises to the membrane. The enzyme catalyses L-seryl-[protein] + ATP = O-phospho-L-seryl-[protein] + ADP + H(+). It carries out the reaction L-threonyl-[protein] + ATP = O-phospho-L-threonyl-[protein] + ADP + H(+). The chain is Putative cysteine-rich receptor-like protein kinase 39 (CRK39) from Arabidopsis thaliana (Mouse-ear cress).